Reading from the N-terminus, the 118-residue chain is MSKLIFLFVVATLATIKASPFDLNMSTPLCDGNLDNRPCRLGDFQVKEEYIRVPITKSADTSTFYTCAWRKMVPCTRWNMVYWNHRLMVRQFKNKPEDTLFLGIKIARPGDWLLGDSH.

A signal peptide spans 1-18 (MSKLIFLFVVATLATIKA). Asn24 is a glycosylation site (N-linked (GlcNAc...) asparagine; by host).

This is an uncharacterized protein from Magallana gigas (Pacific oyster).